The following is a 377-amino-acid chain: Cyclin-I (377 aa).

The segment at 356–377 (TDLSRQEGHASPCPPLQPVSVM) is disordered. The span at 367–377 (PCPPLQPVSVM) shows a compositional bias: pro residues.

It belongs to the cyclin family.

This chain is Cyclin-I (Ccni), found in Mus musculus (Mouse).